A 396-amino-acid chain; its full sequence is Elongation factor Tu (396 aa).

The 195-residue stretch at 11 to 205 (KPHVNIGTIG…IVDEYIPTPE (195 aa)) folds into the tr-type G domain. Positions 20 to 27 (GHVDHGKT) are G1. Residue 20-27 (GHVDHGKT) coordinates GTP. Residue Thr-27 coordinates Mg(2+). A G2 region spans residues 61-65 (GITIN). A G3 region spans residues 82–85 (DAPG). GTP-binding positions include 82–86 (DAPGH) and 137–140 (NKCD). Residues 137 to 140 (NKCD) are G4. Positions 175 to 177 (SAL) are G5.

Belongs to the TRAFAC class translation factor GTPase superfamily. Classic translation factor GTPase family. EF-Tu/EF-1A subfamily. Monomer.

Its subcellular location is the cytoplasm. The enzyme catalyses GTP + H2O = GDP + phosphate + H(+). In terms of biological role, GTP hydrolase that promotes the GTP-dependent binding of aminoacyl-tRNA to the A-site of ribosomes during protein biosynthesis. This Lactobacillus acidophilus (strain ATCC 700396 / NCK56 / N2 / NCFM) protein is Elongation factor Tu.